Reading from the N-terminus, the 135-residue chain is Small ribosomal subunit protein uS12 (135 aa).

3-methylthioaspartic acid is present on D89. The tract at residues 106 to 135 (GVKDRKQGRSKYGAKRPKPGQAPAAAGKKK) is disordered. A compositionally biased stretch (basic residues) spans 113–123 (GRSKYGAKRPK). Residues 124–135 (PGQAPAAAGKKK) are compositionally biased toward low complexity.

It belongs to the universal ribosomal protein uS12 family. Part of the 30S ribosomal subunit. Contacts proteins S8 and S17. May interact with IF1 in the 30S initiation complex.

Functionally, with S4 and S5 plays an important role in translational accuracy. Its function is as follows. Interacts with and stabilizes bases of the 16S rRNA that are involved in tRNA selection in the A site and with the mRNA backbone. Located at the interface of the 30S and 50S subunits, it traverses the body of the 30S subunit contacting proteins on the other side and probably holding the rRNA structure together. The combined cluster of proteins S8, S12 and S17 appears to hold together the shoulder and platform of the 30S subunit. In Synechococcus sp. (strain JA-3-3Ab) (Cyanobacteria bacterium Yellowstone A-Prime), this protein is Small ribosomal subunit protein uS12.